We begin with the raw amino-acid sequence, 106 residues long: uncharacterized protein (106 aa).

Transmembrane regions (helical) follow at residues 4-24 (LPVV…IGFL), 27-47 (MLLR…LFII), and 78-98 (VLIL…INML).

The protein resides in the cell membrane. This is an uncharacterized protein from Bacillus subtilis (strain 168).